The sequence spans 352 residues: MNELQLLGPRAHGEACGRAVLKASAEDFQVDEVLDIPLTGQGEHLWLWVEKRGLNTEEAARRIARAAGLPLKAVSYAGLKDRQALTRQWFSLHLPGKADPDLAAAQGDDLAILRSQRHNRKLQRGAHAANGFTLRLTALEADRDALEQRLQRIAEQGVPNYFGLQRFGFDGGNVVQARDFAARQELPVQRNLRSRLLSAARSHLFNQVLARRVAAGTWNQAQIGDLLAFTGSRSFFLAGEAECGDPRLAILDLHPTGPLWGDGPLPTGGATQMLEQSVADEAGQLVDWLVKADMAHERRILRLPIGGLSWHYPEPDILQLAFVLPAGCFATVVVRELLDLVPAGQTDTPCEF.

The active-site Nucleophile is the D81. The TRUD domain occupies 157 to 303 (GVPNYFGLQR…MAHERRILRL (147 aa)).

This sequence belongs to the pseudouridine synthase TruD family.

It catalyses the reaction uridine(13) in tRNA = pseudouridine(13) in tRNA. Functionally, responsible for synthesis of pseudouridine from uracil-13 in transfer RNAs. This is tRNA pseudouridine synthase D from Ectopseudomonas mendocina (strain ymp) (Pseudomonas mendocina).